Consider the following 446-residue polypeptide: Putative ZDHHC-type palmitoyltransferase 2 (446 aa).

Disordered regions lie at residues 1-33 (MNLYNNSNSSGSSNSSSSSNNKTNIDYNDINNN) and 56-83 (QIINKNNNNNHNRNNNNNNNNNNNHNNP). 4 N-linked (GlcNAc...) asparagine glycosylation sites follow: Asn-5, Asn-8, Asn-14, and Asn-21. The segment covering 56–81 (QIINKNNNNNHNRNNNNNNNNNNNHN) has biased composition (low complexity). N-linked (GlcNAc...) asparagine glycosylation is found at Asn-141, Asn-145, Asn-159, and Asn-165. 5 consecutive transmembrane segments (helical) span residues 178–198 (IVIFLILVPYIYILNFAIFPW), 210–230 (IHSFISMALVIQMLCNYYLCS), 305–325 (YFVLFLFYTSISIIYFFTLLI), 349–369 (LFLLGILIIILIIAGISIMAL), and 410–430 (IISNFSIVFGNLSFLWLLPTI). The region spanning 261-311 (KWCNKCNHQKPERAHHCRYCNRCVLRMDHHCQWLQNCIGLFNQKYFVLFLF) is the DHHC domain.

The protein belongs to the DHHC palmitoyltransferase family.

It is found in the membrane. It catalyses the reaction L-cysteinyl-[protein] + hexadecanoyl-CoA = S-hexadecanoyl-L-cysteinyl-[protein] + CoA. The chain is Putative ZDHHC-type palmitoyltransferase 2 from Dictyostelium discoideum (Social amoeba).